The primary structure comprises 120 residues: UPF0102 protein TW312 (120 aa).

This sequence belongs to the UPF0102 family.

The chain is UPF0102 protein TW312 from Tropheryma whipplei (strain TW08/27) (Whipple's bacillus).